A 903-amino-acid polypeptide reads, in one-letter code: Alanine--tRNA ligase (903 aa).

His581, His585, Cys693, and His697 together coordinate Zn(2+).

Belongs to the class-II aminoacyl-tRNA synthetase family. Zn(2+) is required as a cofactor.

The protein resides in the cytoplasm. The catalysed reaction is tRNA(Ala) + L-alanine + ATP = L-alanyl-tRNA(Ala) + AMP + diphosphate. Functionally, catalyzes the attachment of alanine to tRNA(Ala) in a two-step reaction: alanine is first activated by ATP to form Ala-AMP and then transferred to the acceptor end of tRNA(Ala). Also edits incorrectly charged Ser-tRNA(Ala) and Gly-tRNA(Ala) via its editing domain. This Psychrobacter sp. (strain PRwf-1) protein is Alanine--tRNA ligase.